The sequence spans 549 residues: Glucose-6-phosphate isomerase (549 aa).

E355 (proton donor) is an active-site residue. Catalysis depends on residues H387 and K515.

It belongs to the GPI family.

It is found in the cytoplasm. The catalysed reaction is alpha-D-glucose 6-phosphate = beta-D-fructose 6-phosphate. It participates in carbohydrate biosynthesis; gluconeogenesis. It functions in the pathway carbohydrate degradation; glycolysis; D-glyceraldehyde 3-phosphate and glycerone phosphate from D-glucose: step 2/4. Functionally, catalyzes the reversible isomerization of glucose-6-phosphate to fructose-6-phosphate. The protein is Glucose-6-phosphate isomerase of Pasteurella multocida (strain Pm70).